A 333-amino-acid polypeptide reads, in one-letter code: Beta-ketoacyl-[acyl-carrier-protein] synthase III (333 aa).

Catalysis depends on residues Cys-116 and His-258. The tract at residues 259–263 (QANQR) is ACP-binding. Asn-288 is a catalytic residue.

The protein belongs to the thiolase-like superfamily. FabH family. As to quaternary structure, homodimer.

It is found in the cytoplasm. It carries out the reaction malonyl-[ACP] + acetyl-CoA + H(+) = 3-oxobutanoyl-[ACP] + CO2 + CoA. Its pathway is lipid metabolism; fatty acid biosynthesis. In terms of biological role, catalyzes the condensation reaction of fatty acid synthesis by the addition to an acyl acceptor of two carbons from malonyl-ACP. Catalyzes the first condensation reaction which initiates fatty acid synthesis and may therefore play a role in governing the total rate of fatty acid production. Possesses both acetoacetyl-ACP synthase and acetyl transacylase activities. Its substrate specificity determines the biosynthesis of branched-chain and/or straight-chain of fatty acids. The protein is Beta-ketoacyl-[acyl-carrier-protein] synthase III of Microcystis aeruginosa (strain NIES-843 / IAM M-2473).